The sequence spans 478 residues: Odorant receptor coreceptor (478 aa).

At 1-43 (MMKMKQQGLVADLLPNIRVMKTFGHFVFNYYNDNSSKYLHKVY) the chain is on the cytoplasmic side. A helical membrane pass occupies residues 44–64 (CCVNLFMLLLQFGLCAVNLIV). At 65-73 (ESADVDDLT) the chain is on the extracellular side. The chain crosses the membrane as a helical span at residues 74–94 (ANTITLLFFTHSIVKICYFAI). At 95-133 (RSKYFYRTWAIWNNPNSHPLFAESNARYHAIALKKMRLL) the chain is on the cytoplasmic side. The helical transmembrane segment at 134–154 (LFLVGGTTMLAAVAWTVLTFF) threads the bilayer. Residues 155 to 190 (EHPIRKIVDPVTNETEIIELPQLLIRSFYPFDAGKG) lie on the Extracellular side of the membrane. A glycan (N-linked (GlcNAc...) asparagine) is linked at Asn-167. Residues 191 to 211 (ITHVLVLVYQFYWVLFMLIDA) traverse the membrane as a helical segment. At 212 to 349 (NSLDVLFCSW…IVRLVTAVGD (138 aa)) the chain is on the cytoplasmic side. Positions 261 to 281 (SADHLRDGDNPPPPPPPQSDN) are disordered. The helical transmembrane segment at 350–370 (AYGFALLLHMLTTTITLTLLA) threads the bilayer. Residues 371 to 382 (YQATKVNGINVY) are Extracellular-facing. Residues 383–403 (AASTIGYILYTFGQVFLFCIF) form a helical membrane-spanning segment. Topologically, residues 404–454 (GNRLIEESTSVMEAAYSCHWYDGSEEAKTFVQIVCQQCQKAMSISGAKFFT) are cytoplasmic. The chain crosses the membrane as a helical span at residues 455-475 (VSLDLFASVLGAVVTYFMVLV). Topologically, residues 476–478 (QLK) are extracellular.

Belongs to the insect chemoreceptor superfamily. Heteromeric odorant receptor channel (TC 1.A.69) family. Orco subfamily. In terms of assembly, heterodimer with conventional odorant receptors (ORs). In terms of tissue distribution, present in antennae (at protein level).

It is found in the cell membrane. In terms of biological role, odorant coreceptor which complexes with conventional odorant receptors (ORs) to form odorant-sensing units, providing sensitive and prolonged odorant signaling and calcium permeability. Obligate coreceptor of all odorant receptors. Orco is a universal and integral part of the functional odorant receptor, involved in the dendritic localization of other olfactory receptors. Can form functional ion channels in the absence of an odor-binding odorant receptor. Plays a central role in the perception of olfactory stimuli in ants and is essential for ant social organization. Required for pheromone sensing. Also required for the development and maintenance of odorant receptor neurons (ORNs) and of antennal lobe glomeruli. This is Odorant receptor coreceptor from Ooceraea biroi (Clonal raider ant).